The primary structure comprises 230 residues: Large ribosomal subunit protein uL1 (230 aa).

Belongs to the universal ribosomal protein uL1 family. In terms of assembly, part of the 50S ribosomal subunit.

Its function is as follows. Binds directly to 23S rRNA. The L1 stalk is quite mobile in the ribosome, and is involved in E site tRNA release. Functionally, protein L1 is also a translational repressor protein, it controls the translation of the L11 operon by binding to its mRNA. This Paramagnetospirillum magneticum (strain ATCC 700264 / AMB-1) (Magnetospirillum magneticum) protein is Large ribosomal subunit protein uL1.